Reading from the N-terminus, the 239-residue chain is Prolyl hydroxylase EGLN3 (239 aa).

Residues 62 to 73 (AGPRAGVSKRHL) are beta(2)beta(3) 'finger-like' loop. The segment at 88-104 (CEAINFLLSLIDRLVLY) is required for interaction with ADRB2. A Fe2OG dioxygenase domain is found at 116–214 (ERSKAMVACY…RYAMTVWYFD (99 aa)). Fe cation contacts are provided by His135, Asp137, and His196. Residue Arg205 coordinates 2-oxoglutarate.

In terms of assembly, interacts with ADRB2; the interaction hydroxylates ADRB2 facilitating its ubiquitination by the VHL-E3 ligase complex. Interacts with PAX2; the interaction targets PAX2 for destruction. Interacts with PKM; the interaction hydroxylates PKM in hypoxia. Interacts with WDR83; the interaction leads to almost complete elimination of HIF-mediated reporter activity. Interacts with BCL2 (via its BH4 domain); the interaction disrupts the BAX-BCL4 complex inhibiting the anti-apoptotic activity of BCL2. It depends on Fe(2+) as a cofactor. Requires L-ascorbate as cofactor. Post-translationally, ubiquitinated by SIAH1 and/or SIAH2 in response to the unfolded protein response (UPR), leading to its degradation. Highly expressed in vascular smooth muscle. Moderately expressed in esophagus, stomach, small bowel and aorta. Low levels in tail and kidney. Expression also in pheochromocytoma cell line PC-12.

Its subcellular location is the nucleus. The protein resides in the cytoplasm. The catalysed reaction is L-prolyl-[protein] + 2-oxoglutarate + O2 = trans-4-hydroxy-L-prolyl-[protein] + succinate + CO2. The enzyme catalyses L-prolyl-[hypoxia-inducible factor alpha subunit] + 2-oxoglutarate + O2 = trans-4-hydroxy-L-prolyl-[hypoxia-inducible factor alpha subunit] + succinate + CO2. Functionally, prolyl hydroxylase that mediates hydroxylation of proline residues in target proteins, such as PKM, TELO2, ATF4 and HIF1A. Target proteins are preferentially recognized via a LXXLAP motif. Cellular oxygen sensor that catalyzes, under normoxic conditions, the post-translational formation of 4-hydroxyproline in hypoxia-inducible factor (HIF) alpha proteins. Hydroxylates a specific proline found in each of the oxygen-dependent degradation (ODD) domains (N-terminal, NODD, and C-terminal, CODD) of HIF1A. Also hydroxylates HIF2A. Has a preference for the CODD site for both HIF1A and HIF2A. Hydroxylation on the NODD site by EGLN3 appears to require prior hydroxylation on the CODD site. Hydroxylated HIFs are then targeted for proteasomal degradation via the von Hippel-Lindau ubiquitination complex. Under hypoxic conditions, the hydroxylation reaction is attenuated allowing HIFs to escape degradation resulting in their translocation to the nucleus, heterodimerization with HIF1B, and increased expression of hypoxy-inducible genes. ELGN3 is the most important isozyme in limiting physiological activation of HIFs (particularly HIF2A) in hypoxia. Also hydroxylates PKM in hypoxia, limiting glycolysis. Under normoxia, hydroxylates and regulates the stability of ADRB2. Regulator of cardiomyocyte and neuronal apoptosis. In cardiomyocytes, inhibits the anti-apoptotic effect of BCL2 by disrupting the BAX-BCL2 complex. In neurons, has a NGF-induced proapoptotic effect, probably through regulating CASP3 activity. Also essential for hypoxic regulation of neutrophilic inflammation. Plays a crucial role in DNA damage response (DDR) by hydroxylating TELO2, promoting its interaction with ATR which is required for activation of the ATR/CHK1/p53 pathway. Also mediates hydroxylation of ATF4, leading to decreased protein stability of ATF4. In Rattus norvegicus (Rat), this protein is Prolyl hydroxylase EGLN3 (Egln3).